The sequence spans 140 residues: Nucleoside diphosphate kinase (140 aa).

ATP-binding residues include K11, F59, R87, T93, R104, and N114. The active-site Pros-phosphohistidine intermediate is the H117.

Belongs to the NDK family. As to quaternary structure, homotetramer. It depends on Mg(2+) as a cofactor.

It localises to the cytoplasm. The enzyme catalyses a 2'-deoxyribonucleoside 5'-diphosphate + ATP = a 2'-deoxyribonucleoside 5'-triphosphate + ADP. It catalyses the reaction a ribonucleoside 5'-diphosphate + ATP = a ribonucleoside 5'-triphosphate + ADP. Functionally, major role in the synthesis of nucleoside triphosphates other than ATP. The ATP gamma phosphate is transferred to the NDP beta phosphate via a ping-pong mechanism, using a phosphorylated active-site intermediate. The polypeptide is Nucleoside diphosphate kinase (Rickettsia prowazekii (strain Madrid E)).